Consider the following 1134-residue polypeptide: RNA-binding protein NAB6 (1134 aa).

S2 carries the N-acetylserine modification. 3 disordered regions span residues R112–N133, R151–S173, and S464–T491. 2 stretches are compositionally biased toward low complexity: residues S115–N133 and R151–N164. 2 positions are modified to phosphoserine: S464 and S467. A compositionally biased stretch (low complexity) spans G471–G489. The 74-residue stretch at R653–Y726 folds into the RRM domain. Disordered stretches follow at residues L918–L959 and N1043–A1092. A compositionally biased stretch (polar residues) spans S1057–A1081. The segment covering N1083–A1092 has biased composition (basic residues).

It localises to the cytoplasm. Functionally, RNA-binding protein that associates with mRNAs encoding cell wall proteins. This is RNA-binding protein NAB6 (NAB6) from Saccharomyces cerevisiae (strain ATCC 204508 / S288c) (Baker's yeast).